The primary structure comprises 553 residues: Hydroxylamine reductase (553 aa).

[2Fe-2S] cluster contacts are provided by cysteine 3, cysteine 6, cysteine 18, and cysteine 25. The hybrid [4Fe-2O-2S] cluster site is built by histidine 249, glutamate 273, cysteine 317, cysteine 405, cysteine 433, cysteine 459, glutamate 493, and lysine 495. Cysteine 405 is modified (cysteine persulfide).

It belongs to the HCP family. [2Fe-2S] cluster serves as cofactor. The cofactor is hybrid [4Fe-2O-2S] cluster.

The protein localises to the cytoplasm. It carries out the reaction A + NH4(+) + H2O = hydroxylamine + AH2 + H(+). Catalyzes the reduction of hydroxylamine to form NH(3) and H(2)O. The protein is Hydroxylamine reductase of Actinobacillus succinogenes (strain ATCC 55618 / DSM 22257 / CCUG 43843 / 130Z).